The sequence spans 445 residues: Lipid A 1-phosphatase (445 aa).

The first 22 residues, 1–22 (MNRESFLLLLVLLFALPLHLQA), serve as a signal peptide directing secretion.

It is found in the periplasm. It participates in bacterial outer membrane biogenesis; LPS lipid A biosynthesis. Its function is as follows. Removes the 1-phosphate group from lipid A species. Absence of phosphate groups in lipid A renders the bacteria resistant to host-derived cationic antimicrobial peptides (CAMP) and allowing it to camouflage itself from the host innate immune response. This Porphyromonas gingivalis (strain ATCC 33277 / DSM 20709 / CIP 103683 / JCM 12257 / NCTC 11834 / 2561) protein is Lipid A 1-phosphatase.